Consider the following 632-residue polypeptide: tRNA uridine 5-carboxymethylaminomethyl modification enzyme MnmG (632 aa).

FAD-binding positions include 15-20, Val-127, and Ser-182; that span reads GAGHAG. 276 to 290 contributes to the NAD(+) binding site; the sequence is GARYCPSIEDKIVRF. An FAD-binding site is contributed by Gln-373.

This sequence belongs to the MnmG family. Homodimer. Heterotetramer of two MnmE and two MnmG subunits. Requires FAD as cofactor.

It localises to the cytoplasm. NAD-binding protein involved in the addition of a carboxymethylaminomethyl (cmnm) group at the wobble position (U34) of certain tRNAs, forming tRNA-cmnm(5)s(2)U34. This chain is tRNA uridine 5-carboxymethylaminomethyl modification enzyme MnmG, found in Enterococcus faecalis (strain ATCC 700802 / V583).